A 316-amino-acid chain; its full sequence is UDP-N-acetyl-2-amino-2-deoxy-D-glucuronate oxidase (316 aa).

Residues 11-13, 32-37, Glu-55, 81-84, 101-102, Gln-130, and 171-172 each bind NAD(+); these read GYI, YDINDS, NYLH, EK, and WK.

It belongs to the Gfo/Idh/MocA family. In terms of assembly, homotetramer.

It carries out the reaction UDP-2-acetamido-2-deoxy-alpha-D-glucuronate + NAD(+) = UDP-2-acetamido-2-deoxy-alpha-D-ribo-hex-3-uluronate + NADH + H(+). The catalysed reaction is 2-hydroxyglutarate + NAD(+) = 2-oxoglutarate + NADH + H(+). The protein operates within bacterial outer membrane biogenesis; LPS O-antigen biosynthesis. Plays a role in the biosynthesis of B-band O antigen for serotype O5. Catalyzes the NAD-dependent oxidation of UDP-N-acetylglucosaminuronic acid (UDP-D-GlcNAcA) to UDP-2-acetamido-2-deoxy-3-oxo-D-glucuronic acid (UDP-3-oxo-D-GlcNAcA). Cannot use UDP-GlcNAc or UDP-GalNAc as the nucleotide sugar substrate, and can use only poorly UDP-D-glucuronic acid (UDP-GlcA). Undergoes an NAD(+) recycling mechanism using 2-oxoglutarate as an oxidant. The chain is UDP-N-acetyl-2-amino-2-deoxy-D-glucuronate oxidase from Pseudomonas aeruginosa (strain ATCC 15692 / DSM 22644 / CIP 104116 / JCM 14847 / LMG 12228 / 1C / PRS 101 / PAO1).